A 270-amino-acid polypeptide reads, in one-letter code: 4-hydroxy-4-methyl-2-oxoglutarate aldolase tasA (270 aa).

Catalysis depends on H49, which acts as the Proton acceptor. A divalent metal cation is bound by residues E156 and D182. D182 is a substrate binding site.

The protein belongs to the HpcH/HpaI aldolase family. In terms of assembly, homohexamer; trimer of dimers. Co(2+) serves as cofactor. It depends on Mn(2+) as a cofactor. The cofactor is Zn(2+). Requires Fe(2+) as cofactor. Mg(2+) is required as a cofactor.

It carries out the reaction 4-hydroxy-4-methyl-2-oxoglutarate = 2 pyruvate. Its pathway is secondary metabolite biosynthesis. 4-hydroxy-4-methyl-2-oxoglutarate aldolase; part of the gene cluster that mediates the biosynthesis of the tetramic acids Sch210971 and Sch210972, potential anti-HIV fungal natural product that contain a decalin core. The PKS module of tasS together with the enoylreductase tasC catalyze the formation of the polyketide unit which is then conjugated to 4-hydroxyl-4-methyl glutamate (HMG) by the condensation domain of the tasS NRPS module. One unique structural feature of Sch210971 and Sch210972 is the tetramic acid motif proposed to be derived from the non-proteinogenic amino acid HMG, by a Dieckmann-type condensation catalyzed by the reductase domain of tasS. The aldolase tasA catalyzes the aldol condensation of 2 molecules of pyruvic acid to yield the intermediate 4-hydroxyl-4-methyl-2-oxoglutarate (HMOG), which can then be stereoselectively transaminated, may be by tasG, to form HMG. The Diels-Alderase tas3 then uses the Dieckmann product of tasS as substrate and catalyzes the Diels-Alder cycloaddition to form the decalin ring of Sch210971 and Sch210972. The sequence is that of 4-hydroxy-4-methyl-2-oxoglutarate aldolase tasA from Hapsidospora irregularis.